The chain runs to 429 residues: uncharacterized protein (429 aa).

The segment covering 1 to 12 (MSDSKEDIRNGQ) has biased composition (basic and acidic residues). Disordered stretches follow at residues 1-63 (MSDS…APEA), 257-306 (RSRA…SDRM), and 320-429 (YRGY…SDSE). Residues 328–362 (EENEEDDLGDFIAEEEEEEEQEEEQEEDEEDEEEV) are compositionally biased toward acidic residues. A compositionally biased stretch (basic and acidic residues) spans 369–378 (KGFDADKEAS).

It belongs to the LEO1 family.

It localises to the nucleus. This is an uncharacterized protein from Schizosaccharomyces pombe (strain 972 / ATCC 24843) (Fission yeast).